Consider the following 274-residue polypeptide: Large ribosomal subunit protein uL2cz/uL2cy (274 aa).

Disordered regions lie at residues 1–21 (MAIH…VDSQ) and 224–252 (NPVD…GYPA).

It belongs to the universal ribosomal protein uL2 family. Part of the 50S ribosomal subunit.

The protein localises to the plastid. Its subcellular location is the chloroplast. This chain is Large ribosomal subunit protein uL2cz/uL2cy (rpl2-A), found in Olimarabidopsis pumila (Dwarf rocket).